A 421-amino-acid chain; its full sequence is Histidine--tRNA ligase (421 aa).

It belongs to the class-II aminoacyl-tRNA synthetase family.

Its subcellular location is the cytoplasm. It catalyses the reaction tRNA(His) + L-histidine + ATP = L-histidyl-tRNA(His) + AMP + diphosphate + H(+). This Pyrobaculum islandicum (strain DSM 4184 / JCM 9189 / GEO3) protein is Histidine--tRNA ligase.